The primary structure comprises 147 residues: Small ribosomal subunit protein uS12 (147 aa).

Belongs to the universal ribosomal protein uS12 family. In terms of assembly, part of the 30S ribosomal subunit.

Its function is as follows. With S4 and S5 plays an important role in translational accuracy. Located at the interface of the 30S and 50S subunits. The polypeptide is Small ribosomal subunit protein uS12 (Pyrococcus abyssi (strain GE5 / Orsay)).